The sequence spans 496 residues: Cytochrome P450 71D180 (496 aa).

The helical; Signal-anchor for type II membrane protein transmembrane segment at 1–21 (MDISISWVVIIVFVLSYLILM) threads the bilayer. Residue Cys435 coordinates heme. Positions 471–496 (MSETPGLSGPRKNPLIMIPTIHNPTS) are disordered.

Belongs to the cytochrome P450 family. Heme is required as a cofactor.

It localises to the membrane. The catalysed reaction is gamma-terpinene + 2 reduced [NADPH--hemoprotein reductase] + 2 O2 = carvacrol + 2 oxidized [NADPH--hemoprotein reductase] + 3 H2O + 2 H(+). It carries out the reaction (4S)-limonene + reduced [NADPH--hemoprotein reductase] + O2 = (1S,5R)-carveol + oxidized [NADPH--hemoprotein reductase] + H2O + H(+). The enzyme catalyses (4R)-limonene + reduced [NADPH--hemoprotein reductase] + O2 = (1R,5S)-carveol + oxidized [NADPH--hemoprotein reductase] + H2O + H(+). Its pathway is secondary metabolite biosynthesis; terpenoid biosynthesis. Involved in the biosynthesis of phenolic monoterpenes natural products thymol and carvacrol which have a broad range of biological activities acting as antimicrobial compounds, insecticides, antioxidants and pharmaceutical agents. Catalyzes the C2-hydroxylation of gamma-terpinene to produce carvacrol. Mediates also the C6-hydroxylation of (4S)-limonene and (4R)-limonene to form carveol. The sequence is that of Cytochrome P450 71D180 from Origanum majorana (Sweet marjoram).